Consider the following 454-residue polypeptide: Chromosomal replication initiator protein DnaA (454 aa).

The segment at 1–79 is domain I, interacts with DnaA modulators; the sequence is MSLCLWKQCL…NSPLIKFEIY (79 aa). A domain II region spans residues 79 to 117; it reads YQIYKENKLKKNIENNNNNKNEKLIWSNIPKFKNLSYRS. Residues 118 to 334 are domain III, AAA+ region; sequence NINKRYNFQN…GALNRVILNS (217 aa). ATP contacts are provided by G162, G164, K165, and T166. Residues 335–454 form a domain IV, binds dsDNA region; sequence RFTHRAITVD…FLNLIRTLSK (120 aa).

The protein belongs to the DnaA family. As to quaternary structure, oligomerizes as a right-handed, spiral filament on DNA at oriC.

The protein localises to the cytoplasm. Plays an essential role in the initiation and regulation of chromosomal replication. ATP-DnaA binds to the origin of replication (oriC) to initiate formation of the DNA replication initiation complex once per cell cycle. Binds the DnaA box (a 9 base pair repeat at the origin) and separates the double-stranded (ds)DNA. Forms a right-handed helical filament on oriC DNA; dsDNA binds to the exterior of the filament while single-stranded (ss)DNA is stabiized in the filament's interior. The ATP-DnaA-oriC complex binds and stabilizes one strand of the AT-rich DNA unwinding element (DUE), permitting loading of DNA polymerase. After initiation quickly degrades to an ADP-DnaA complex that is not apt for DNA replication. Binds acidic phospholipids. In Buchnera aphidicola subsp. Acyrthosiphon pisum (strain 5A), this protein is Chromosomal replication initiator protein DnaA.